The following is a 307-amino-acid chain: Acyl transferase (307 aa).

Residues Ser-116, Asp-213, and His-243 each act as charge relay system in the active site.

Belongs to the LuxD family.

It functions in the pathway lipid metabolism; fatty acid reduction for biolumincescence. Functionally, acyl transferase is part of the fatty acid reductase system required for aldehyde biosynthesis; it produces fatty acids for the luminescent reaction. The protein is Acyl transferase of Photorhabdus luminescens (Xenorhabdus luminescens).